The following is a 311-amino-acid chain: Transcription initiation factor IIB (311 aa).

A TFIIB-type zinc finger spans residues 11 to 42; the sequence is KETKCPECGSTKLINDHERGEVVCGACGLVID. C15, C18, C34, and C37 together coordinate Zn(2+). A run of 2 repeats spans residues 128-211 and 222-303.

It belongs to the TFIIB family.

Its function is as follows. Stabilizes TBP binding to an archaeal box-A promoter. Also responsible for recruiting RNA polymerase II to the pre-initiation complex (DNA-TBP-TFIIB). The chain is Transcription initiation factor IIB from Methanosphaera stadtmanae (strain ATCC 43021 / DSM 3091 / JCM 11832 / MCB-3).